The sequence spans 511 residues: Cobyric acid synthase (511 aa).

In terms of domain architecture, GATase cobBQ-type spans 251–443 (LLDIAIICLP…IHGIFDNDIF (193 aa)). The Nucleophile role is filled by Cys-332. His-435 is a catalytic residue.

Belongs to the CobB/CobQ family. CobQ subfamily.

It functions in the pathway cofactor biosynthesis; adenosylcobalamin biosynthesis. Catalyzes amidations at positions B, D, E, and G on adenosylcobyrinic A,C-diamide. NH(2) groups are provided by glutamine, and one molecule of ATP is hydrogenolyzed for each amidation. In Listeria innocua serovar 6a (strain ATCC BAA-680 / CLIP 11262), this protein is Cobyric acid synthase.